A 334-amino-acid polypeptide reads, in one-letter code: UPF0104 membrane protein MTH_378 (334 aa).

Transmembrane regions (helical) follow at residues 7-27 (FYFF…MGPS), 33-53 (VYMA…GVLA), 120-140 (FFDL…VPVI), 142-162 (VIAL…YLVN), 218-238 (VIFI…YLVF), 247-267 (FSAV…SALP), 277-297 (MAGL…IALV), and 300-320 (IISF…YAGE).

It belongs to the UPF0104 family.

Its subcellular location is the cell membrane. The polypeptide is UPF0104 membrane protein MTH_378 (Methanothermobacter thermautotrophicus (strain ATCC 29096 / DSM 1053 / JCM 10044 / NBRC 100330 / Delta H) (Methanobacterium thermoautotrophicum)).